The primary structure comprises 434 residues: Enolase (434 aa).

Q167 is a binding site for (2R)-2-phosphoglycerate. The Proton donor role is filled by E209. Mg(2+)-binding residues include D246, E291, and D318. Positions 343, 372, 373, and 394 each coordinate (2R)-2-phosphoglycerate. The active-site Proton acceptor is K343.

It belongs to the enolase family. In terms of assembly, component of the RNA degradosome, a multiprotein complex involved in RNA processing and mRNA degradation. It depends on Mg(2+) as a cofactor.

It localises to the cytoplasm. The protein localises to the secreted. Its subcellular location is the cell surface. The enzyme catalyses (2R)-2-phosphoglycerate = phosphoenolpyruvate + H2O. The protein operates within carbohydrate degradation; glycolysis; pyruvate from D-glyceraldehyde 3-phosphate: step 4/5. In terms of biological role, catalyzes the reversible conversion of 2-phosphoglycerate (2-PG) into phosphoenolpyruvate (PEP). It is essential for the degradation of carbohydrates via glycolysis. The sequence is that of Enolase from Buchnera aphidicola subsp. Schizaphis graminum (strain Sg).